We begin with the raw amino-acid sequence, 608 residues long: Afamin (608 aa).

An N-terminal signal peptide occupies residues M1 to A21. Albumin domains follow at residues L22–T210, Q211–E403, and T404–D599. The N-linked (GlcNAc...) asparagine glycan is linked to N33. Disulfide bonds link C77–C86, C99–C114, C113–C124, C148–C193, C224–C270, C269–C277, C289–C303, C302–C313, C340–C385, and C384–C393. N-linked (GlcNAc...) asparagine glycosylation is present at N109. N153 carries N-linked (GlcNAc...) asparagine glycosylation. Residues A215–K319 are binding pocket for hydrophobic ligands. N402 carries an N-linked (GlcNAc...) asparagine glycan. Cystine bridges form between C416–C462, C461–C470, C483–C499, C498–C509, and C580–C589. N-linked (GlcNAc...) asparagine glycosylation is present at N488. The disordered stretch occupies residues K585 to R608.

This sequence belongs to the ALB/AFP/VDB family. In terms of assembly, forms a 1:1 complex with Wnt family members; interacts with WNT1, WNT2B, WNT3, WNT3A, WNT5A, WNT7A, WNT7B, WNT8, WNT9A, WNT9B, WNT10A and WNT10B. In terms of processing, N-glycosylated; more than 90% of the glycans are sialylated.

Its subcellular location is the secreted. Functionally, functions as a carrier for hydrophobic molecules in body fluids. Essential for the solubility and activity of lipidated Wnt family members, including WNT1, WNT2B, WNT3, WNT3A, WNT5A, WNT7A, WNT7B, WNT8, WNT9A, WNT9B, WNT10A and WNT10B. Binds vitamin E. May transport vitamin E in body fluids under conditions where the lipoprotein system is not sufficient. May be involved in the transport of vitamin E across the blood-brain barrier. The protein is Afamin (Afm) of Rattus norvegicus (Rat).